A 974-amino-acid chain; its full sequence is UvrABC system protein A (974 aa).

34–41 (GLSGSGKS) is an ATP binding site. ABC transporter domains follow at residues 331-610 (WARS…TNSL) and 630-959 (ISKT…QFLK). 663-670 (GVSGGGKS) is an ATP binding site. The segment at 762 to 788 (CEACQGDGVIKIEMHFLPDVYVTCDVC) adopts a C4-type zinc-finger fold.

It belongs to the ABC transporter superfamily. UvrA family. As to quaternary structure, forms a heterotetramer with UvrB during the search for lesions.

It is found in the cytoplasm. The UvrABC repair system catalyzes the recognition and processing of DNA lesions. UvrA is an ATPase and a DNA-binding protein. A damage recognition complex composed of 2 UvrA and 2 UvrB subunits scans DNA for abnormalities. When the presence of a lesion has been verified by UvrB, the UvrA molecules dissociate. This Brucella melitensis biotype 1 (strain ATCC 23456 / CCUG 17765 / NCTC 10094 / 16M) protein is UvrABC system protein A.